The sequence spans 197 residues: Protein GrpE (197 aa).

Residues 1-39 are disordered; the sequence is MSSKEQKTPEGQAPEEIIMDQHEEIEAVEPEASAEQVDP.

Belongs to the GrpE family. As to quaternary structure, homodimer.

It is found in the cytoplasm. Functionally, participates actively in the response to hyperosmotic and heat shock by preventing the aggregation of stress-denatured proteins, in association with DnaK and GrpE. It is the nucleotide exchange factor for DnaK and may function as a thermosensor. Unfolded proteins bind initially to DnaJ; upon interaction with the DnaJ-bound protein, DnaK hydrolyzes its bound ATP, resulting in the formation of a stable complex. GrpE releases ADP from DnaK; ATP binding to DnaK triggers the release of the substrate protein, thus completing the reaction cycle. Several rounds of ATP-dependent interactions between DnaJ, DnaK and GrpE are required for fully efficient folding. The sequence is that of Protein GrpE from Escherichia coli O157:H7 (strain EC4115 / EHEC).